A 131-amino-acid chain; its full sequence is uncharacterized protein (131 aa).

The next 4 membrane-spanning stretches (helical) occupy residues 7–29 (LLKF…SLLY), 49–69 (LVKV…LIAL), 76–98 (LILI…LFTY), and 102–124 (ELSE…FLYL).

It localises to the cell membrane. This is an uncharacterized protein from Aquifex aeolicus (strain VF5).